A 227-amino-acid chain; its full sequence is Cleavage and polyadenylation specificity factor subunit 5 (227 aa).

An N-acetylserine modification is found at serine 2. The necessary for RNA-binding stretch occupies residues 2 to 147 (SVVPPNRSQT…DWVIDDCIGN (146 aa)). Arginine 15 carries the post-translational modification Omega-N-methylarginine. N6-acetyllysine is present on residues lysine 23 and lysine 29. At tyrosine 40 the chain carries Phosphotyrosine. Lysine 56 carries the N6-acetyllysine modification. Positions 76-201 (MRRTVEGVLI…KLVAAPLFEL (126 aa)) constitute a Nudix hydrolase domain. The necessary for interactions with PAPOLA and PABPN1 stretch occupies residues 81–160 (EGVLIVHEHR…PNFEPPQYPY (80 aa)). The interaction with RNA stretch occupies residues 102–104 (TFF). The Nudix box signature appears at 109–130 (GELNPGEDEVEGLKRLMTEILG).

This sequence belongs to the Nudix hydrolase family. CPSF5 subfamily. Homodimer (via N- and C-terminus); binds RNA as homodimer. Component of the cleavage factor Im (CFIm) complex which is a heterotetramer composed of two subunits of NUDT21/CPSF5 and two subunits of CPSF6 or CPSF7 or a heterodimer of CPSF6 and CPSF7. The cleavage factor Im (CFIm) complex associates with the CPSF and CSTF complexes to promote the assembly of the core mRNA 3'-processing machinery. Interacts with CPSF6 (via the RRM domain); this interaction is direct and enhances binding to RNA. Interacts with CPSF7. Interacts with FIP1L1; this interaction occurs in a RNA sequence-specific manner. Interacts with PABPN1. Interacts (via N-terminus) with PAPOLA (via C-terminus); this interaction is direct and diminished by acetylation. Interacts with SNRNP70. Interacts with VIRMA. Acetylated mainly by p300/CBP, recruited to the complex by CPSF6. Acetylation decreases interaction with PAPAO. Deacetylated by the class I/II HDACs, HDAC1, HDAC3 and HDAC10, and by the class III HDACs, SIRT1 and SIRT2.

It is found in the nucleus. Its subcellular location is the cytoplasm. In terms of biological role, component of the cleavage factor Im (CFIm) complex that functions as an activator of the pre-mRNA 3'-end cleavage and polyadenylation processing required for the maturation of pre-mRNA into functional mRNAs. CFIm contributes to the recruitment of multiprotein complexes on specific sequences on the pre-mRNA 3'-end, so called cleavage and polyadenylation signals (pA signals). Most pre-mRNAs contain multiple pA signals, resulting in alternative cleavage and polyadenylation (APA) producing mRNAs with variable 3'-end formation. The CFIm complex acts as a key regulator of cleavage and polyadenylation site choice during APA through its binding to 5'-UGUA-3' elements localized in the 3'-untranslated region (UTR) for a huge number of pre-mRNAs. NUDT21/CPSF5 activates indirectly the mRNA 3'-processing machinery by recruiting CPSF6 and/or CPSF7. Binds to 5'-UGUA-3' elements localized upstream of pA signals that act as enhancers of pre-mRNA 3'-end processing. The homodimer mediates simultaneous sequence-specific recognition of two 5'-UGUA-3' elements within the pre-mRNA. Plays a role in somatic cell fate transitions and pluripotency by regulating widespread changes in gene expression through an APA-dependent function. Binds to chromatin. Binds to, but does not hydrolyze mono- and di-adenosine nucleotides. The sequence is that of Cleavage and polyadenylation specificity factor subunit 5 (NUDT21) from Bos taurus (Bovine).